We begin with the raw amino-acid sequence, 514 residues long: Uronyl 2-sulfotransferase homolog pip (514 aa).

At M1 to R30 the chain is on the cytoplasmic side. Residues S31–T50 traverse the membrane as a helical; Signal-anchor for type II membrane protein segment. Over N51 to Y514 the chain is Lumenal. The segment covering H112–L121 has biased composition (basic and acidic residues). The interval H112–D185 is disordered. Residues H127 to M140 are compositionally biased toward basic residues. The segment covering H155 to E170 has biased composition (basic and acidic residues). Acidic residues predominate over residues V171–D185. N207 is a glycosylation site (N-linked (GlcNAc...) asparagine). Residue H282 is part of the active site. N-linked (GlcNAc...) asparagine glycans are attached at residues N287, N416, N451, and N467.

This sequence belongs to the sulfotransferase 3 family. Interacts with wbl/windbeutel; the interaction is direct and does not require pip to be folded. In terms of tissue distribution, ovary-specific. Specifically expressed in the ventral follicle cells of stage 9-10 egg chambers. As to expression, expressed in ovaries. Specifically expressed in the ventral follicle cells of stage 9-10 egg chambers.

It is found in the golgi apparatus membrane. Functionally, sulfotransferase involved in dorsoventral axis patterning in early embryos. Required for the ventral activation of ea/easter by the protease snk in the perivitelline space between the embryonic membrane and the eggshell; activation of ea requires both activation of the ndl-gd-snk protease cascade and sulfation of a vitelline membrane component by pip. Probably acts by mediating the sulfation of some glycoprotein or glycosaminoglycan stably deposited in the vitelline membrane, whose ventrally localized modification leads to spatially restricted activation of the protease cascade resulting in localized activation of the spz Toll receptor ligand by ea. Probably required redundantly with isoform H for dorsoventral axis patterning in embryos. Lacks 2-O-sulfotransferase activity towards completely desulfated N-sulfated (CDSNS) heparin, chondroitin, and chondroitin sulfate A, B (dermatan sulfate), and C. Sulfates several components of the eggshell vitelline membrane, including Vml, Vm26Aa, Vm32E and psd/palisade/Fcp26Aa. Its function is as follows. Probably required redundantly with isoform A for dorsoventral axis patterning in embryos. In terms of biological role, lacks 2-O-sulfotransferase activity towards CDSNS heparin, chondroitin, and chondroitin sulfate A, B (dermatan sulfate), and C. This chain is Uronyl 2-sulfotransferase homolog pip, found in Drosophila melanogaster (Fruit fly).